We begin with the raw amino-acid sequence, 240 residues long: 1-(5-phosphoribosyl)-5-[(5-phosphoribosylamino)methylideneamino] imidazole-4-carboxamide isomerase (240 aa).

D8 functions as the Proton acceptor in the catalytic mechanism. Residue D130 is the Proton donor of the active site.

Belongs to the HisA/HisF family.

The protein localises to the cytoplasm. The enzyme catalyses 1-(5-phospho-beta-D-ribosyl)-5-[(5-phospho-beta-D-ribosylamino)methylideneamino]imidazole-4-carboxamide = 5-[(5-phospho-1-deoxy-D-ribulos-1-ylimino)methylamino]-1-(5-phospho-beta-D-ribosyl)imidazole-4-carboxamide. The protein operates within amino-acid biosynthesis; L-histidine biosynthesis; L-histidine from 5-phospho-alpha-D-ribose 1-diphosphate: step 4/9. The sequence is that of 1-(5-phosphoribosyl)-5-[(5-phosphoribosylamino)methylideneamino] imidazole-4-carboxamide isomerase from Elusimicrobium minutum (strain Pei191).